The sequence spans 314 residues: Olfactory receptor 5P51 (314 aa).

The Extracellular segment spans residues 1-28 (MAFLEDGNHTAVTEFVLFGLTDDPVLRV). N-linked (GlcNAc...) asparagine glycosylation is present at asparagine 8. A helical membrane pass occupies residues 29-49 (ILFIIFLCIYLVNVSGNLSTI). The Cytoplasmic segment spans residues 50–57 (LLIRVSSQ). The helical transmembrane segment at 58-78 (LHHPMYFFLSHLASVDVGYSS) threads the bilayer. The Extracellular segment spans residues 79 to 102 (TVTPKMLANFLLERSTISYLGCTI). A disulfide bridge links cysteine 100 with cysteine 192. A helical transmembrane segment spans residues 103-123 (QLFSGAFVGTLECFLLATMAY). The Cytoplasmic portion of the chain corresponds to 124 to 136 (DRFIAICNPLLYS). The chain crosses the membrane as a helical span at residues 137–157 (TKMSTQVCIQLLVGSYIGGFL). The Extracellular segment spans residues 158-199 (NASSFLLSFFPLLFCGPNRVNHYSCDLTPLIELSCSGSNVPI). Residues 200-220 (VPASFCSAFVIIVTVSVIAIS) form a helical membrane-spanning segment. At 221–240 (YTYILITILKMRSTEGRQKA) the chain is on the cytoplasmic side. A helical membrane pass occupies residues 241–261 (FSTCTSHLTAVTLYYGTVTFI). Residues 262-274 (YVMPKSSYSTDQN) are Extracellular-facing. Residues 275-295 (KVVSVFYTVVIPMLNPIIYSL) traverse the membrane as a helical segment. Residues 296–314 (RNNEIKGALKRQLARKIFS) are Cytoplasmic-facing.

Belongs to the G-protein coupled receptor 1 family.

The protein localises to the cell membrane. Functionally, potential odorant receptor. The polypeptide is Olfactory receptor 5P51 (Mus musculus (Mouse)).